The sequence spans 501 residues: Large ribosomal subunit protein uL2m (501 aa).

2 disordered regions span residues 187-217 (GRER…APRR) and 459-501 (AMNP…KRRN). Polar residues predominate over residues 198-213 (NTFSQSEGQRWKTQSG). A compositionally biased stretch (basic and acidic residues) spans 464–474 (DHPHGGGEGRT).

Belongs to the universal ribosomal protein uL2 family.

The protein resides in the mitochondrion. The sequence is that of Large ribosomal subunit protein uL2m (RPL2) from Marchantia polymorpha (Common liverwort).